The chain runs to 89 residues: Aminoacyl carrier protein 2 (89 aa).

Residues 6 to 84 (INVQNRVLSV…AMERMILNQL (79 aa)) form the Carrier domain. O-(pantetheine 4'-phosphoryl)serine is present on serine 42.

In terms of processing, 4'-phosphopantetheine is transferred from CoA to a specific serine of the apo-form of this carrier protein.

Its function is as follows. Aminoacyl carrier protein. Can be charged with L-glycine via the formation of a thioester bond between the amino acid and the 4'-phosphopantetheinyl prosthetic group, catalyzed by the bll6282 ligase. In Bradyrhizobium diazoefficiens (strain JCM 10833 / BCRC 13528 / IAM 13628 / NBRC 14792 / USDA 110), this protein is Aminoacyl carrier protein 2.